We begin with the raw amino-acid sequence, 356 residues long: DNA polymerase IV (356 aa).

One can recognise a UmuC domain in the interval 6 to 187 (IIHIDMDYFF…LDIGDFPGVG (182 aa)). 2 residues coordinate Mg(2+): D10 and D105. The active site involves E106.

It belongs to the DNA polymerase type-Y family. Monomer. Mg(2+) serves as cofactor.

Its subcellular location is the cytoplasm. The catalysed reaction is DNA(n) + a 2'-deoxyribonucleoside 5'-triphosphate = DNA(n+1) + diphosphate. In terms of biological role, poorly processive, error-prone DNA polymerase involved in untargeted mutagenesis. Copies undamaged DNA at stalled replication forks, which arise in vivo from mismatched or misaligned primer ends. These misaligned primers can be extended by PolIV. Exhibits no 3'-5' exonuclease (proofreading) activity. May be involved in translesional synthesis, in conjunction with the beta clamp from PolIII. The polypeptide is DNA polymerase IV (Staphylococcus aureus (strain JH1)).